Consider the following 516-residue polypeptide: Protein psiC (516 aa).

A signal peptide spans 1 to 19 (MKILILSFFLILGINLVFC). Positions 109–249 (ESKDEPGIYV…YDACGVCLGK (141 aa)) constitute a PA14 domain. Asn134, Asn234, Asn250, Asn284, Asn333, Asn357, and Asn367 each carry an N-linked (GlcNAc...) asparagine glycan. Positions 418–427 (DIIIDSSSDI) are enriched in low complexity. The tract at residues 418 to 465 (DIIIDSSSDIPIPTLSPSPQPSRFPTDTPTNTPMPPTRPPTPTEDPKI) is disordered. The segment covering 449–460 (TPMPPTRPPTPT) has biased composition (pro residues).

This sequence belongs to the prespore-cell-inducing factor family.

The protein localises to the secreted. The polypeptide is Protein psiC (psiC) (Dictyostelium discoideum (Social amoeba)).